Consider the following 390-residue polypeptide: Sorting nexin C1711.11 (390 aa).

Residues 1–123 (MLKCTIKNEQ…QFLENNSWKS (123 aa)) enclose the PX domain. The a 1,2-diacyl-sn-glycero-3-phospho-(1D-myo-inositol-3-phosphate) site is built by Arg44, Lys70, and Arg89.

It belongs to the sorting nexin family.

It is found in the cytoplasm. The protein resides in the membrane. The polypeptide is Sorting nexin C1711.11 (Schizosaccharomyces pombe (strain 972 / ATCC 24843) (Fission yeast)).